The following is a 360-amino-acid chain: Peptide chain release factor 1 (360 aa).

Q237 carries the N5-methylglutamine modification.

This sequence belongs to the prokaryotic/mitochondrial release factor family. Post-translationally, methylated by PrmC. Methylation increases the termination efficiency of RF1.

The protein resides in the cytoplasm. In terms of biological role, peptide chain release factor 1 directs the termination of translation in response to the peptide chain termination codons UAG and UAA. The sequence is that of Peptide chain release factor 1 from Pseudomonas putida (strain W619).